We begin with the raw amino-acid sequence, 137 residues long: Proofreading thioesterase EntH (137 aa).

The Nucleophile or proton acceptor role is filled by Glu63.

This sequence belongs to the thioesterase PaaI family. In terms of assembly, homotetramer. Dimer of dimers. Interacts specifically with the aryl carrier protein (ArCP) domain of EntB.

The protein resides in the cytoplasm. It functions in the pathway siderophore biosynthesis; enterobactin biosynthesis. In terms of biological role, required for optimal enterobactin synthesis. Acts as a proofreading enzyme that prevents EntB misacylation by hydrolyzing the thioester bound existing between EntB and wrongly charged molecules. This Citrobacter koseri (strain ATCC BAA-895 / CDC 4225-83 / SGSC4696) protein is Proofreading thioesterase EntH.